Reading from the N-terminus, the 333-residue chain is L-lactate dehydrogenase B chain (333 aa).

NAD(+)-binding positions include 29-57 (GQVGMACAISVLEKGLCDELALVDVLEDK) and R99. R106, N138, and R169 together coordinate substrate. N138 serves as a coordination point for NAD(+). H193 functions as the Proton acceptor in the catalytic mechanism. T248 lines the substrate pocket.

The protein belongs to the LDH/MDH superfamily. LDH family. Homotetramer.

It localises to the cytoplasm. It carries out the reaction (S)-lactate + NAD(+) = pyruvate + NADH + H(+). It participates in fermentation; pyruvate fermentation to lactate; (S)-lactate from pyruvate: step 1/1. Its function is as follows. Interconverts simultaneously and stereospecifically pyruvate and lactate with concomitant interconversion of NADH and NAD(+). The chain is L-lactate dehydrogenase B chain (LDHB) from Sceloporus woodi (Florida scrub lizard).